We begin with the raw amino-acid sequence, 573 residues long: Sulfite reductase [NADPH] hemoprotein beta-component (573 aa).

Positions 438, 444, 483, and 487 each coordinate [4Fe-4S] cluster. C487 contacts siroheme.

The protein belongs to the nitrite and sulfite reductase 4Fe-4S domain family. Alpha(8)-beta(8). The alpha component is a flavoprotein, the beta component is a hemoprotein. The cofactor is siroheme. It depends on [4Fe-4S] cluster as a cofactor.

The enzyme catalyses hydrogen sulfide + 3 NADP(+) + 3 H2O = sulfite + 3 NADPH + 4 H(+). It participates in sulfur metabolism; hydrogen sulfide biosynthesis; hydrogen sulfide from sulfite (NADPH route): step 1/1. Its function is as follows. Component of the sulfite reductase complex that catalyzes the 6-electron reduction of sulfite to sulfide. This is one of several activities required for the biosynthesis of L-cysteine from sulfate. The protein is Sulfite reductase [NADPH] hemoprotein beta-component of Staphylococcus haemolyticus (strain JCSC1435).